Consider the following 217-residue polypeptide: Probable transaldolase (217 aa).

K83 (schiff-base intermediate with substrate) is an active-site residue.

It belongs to the transaldolase family. Type 3B subfamily.

Its subcellular location is the cytoplasm. The catalysed reaction is D-sedoheptulose 7-phosphate + D-glyceraldehyde 3-phosphate = D-erythrose 4-phosphate + beta-D-fructose 6-phosphate. It functions in the pathway carbohydrate degradation; pentose phosphate pathway; D-glyceraldehyde 3-phosphate and beta-D-fructose 6-phosphate from D-ribose 5-phosphate and D-xylulose 5-phosphate (non-oxidative stage): step 2/3. Functionally, transaldolase is important for the balance of metabolites in the pentose-phosphate pathway. The polypeptide is Probable transaldolase (Clostridium botulinum (strain Loch Maree / Type A3)).